Consider the following 78-residue polypeptide: Large ribosomal subunit protein eL38 (78 aa).

Belongs to the eukaryotic ribosomal protein eL38 family. In terms of assembly, component of the large ribosomal subunit (LSU). Mature yeast ribosomes consist of a small (40S) and a large (60S) subunit. The 40S small subunit contains 1 molecule of ribosomal RNA (18S rRNA) and 33 different proteins (encoded by 57 genes). The large 60S subunit contains 3 rRNA molecules (25S, 5.8S and 5S rRNA) and 46 different proteins (encoded by 81 genes).

The protein resides in the cytoplasm. Its function is as follows. Component of the ribosome, a large ribonucleoprotein complex responsible for the synthesis of proteins in the cell. The small ribosomal subunit (SSU) binds messenger RNAs (mRNAs) and translates the encoded message by selecting cognate aminoacyl-transfer RNA (tRNA) molecules. The large subunit (LSU) contains the ribosomal catalytic site termed the peptidyl transferase center (PTC), which catalyzes the formation of peptide bonds, thereby polymerizing the amino acids delivered by tRNAs into a polypeptide chain. The nascent polypeptides leave the ribosome through a tunnel in the LSU and interact with protein factors that function in enzymatic processing, targeting, and the membrane insertion of nascent chains at the exit of the ribosomal tunnel. In Saccharomyces cerevisiae (strain ATCC 204508 / S288c) (Baker's yeast), this protein is Large ribosomal subunit protein eL38.